The sequence spans 279 residues: NADPH-dependent 7-cyano-7-deazaguanine reductase (279 aa).

86 to 88 is a binding site for substrate; that stretch reads IES. 88–89 provides a ligand contact to NADPH; the sequence is SK. The active-site Thioimide intermediate is cysteine 187. The active-site Proton donor is the aspartate 194. Substrate is bound at residue 226–227; the sequence is HE. NADPH is bound at residue 255–256; sequence RG.

It belongs to the GTP cyclohydrolase I family. QueF type 2 subfamily. Homodimer.

It localises to the cytoplasm. It catalyses the reaction 7-aminomethyl-7-carbaguanine + 2 NADP(+) = 7-cyano-7-deazaguanine + 2 NADPH + 3 H(+). The protein operates within tRNA modification; tRNA-queuosine biosynthesis. Catalyzes the NADPH-dependent reduction of 7-cyano-7-deazaguanine (preQ0) to 7-aminomethyl-7-deazaguanine (preQ1). This is NADPH-dependent 7-cyano-7-deazaguanine reductase from Actinobacillus pleuropneumoniae serotype 3 (strain JL03).